The chain runs to 274 residues: Kit ligand (274 aa).

Positions 1-25 are cleaved as a signal peptide; that stretch reads MKKTQTWIITCIYLQLLLFNPLVKT. Residues 26 to 215 lie on the Extracellular side of the membrane; sequence KGICENRVTD…SNFTGDSNLQ (190 aa). 2 disulfides stabilise this stretch: cysteine 29/cysteine 114 and cysteine 68/cysteine 164. 5 N-linked (GlcNAc...) asparagine glycosylation sites follow: asparagine 90, asparagine 97, asparagine 145, asparagine 196, and asparagine 207. A helical transmembrane segment spans residues 216–238; the sequence is WAAMALPAFFSLVIGFAFGALYW. Topologically, residues 239–274 are cytoplasmic; sequence KKKQPNLTRAVENIQINEEDNEISMLQEKEREFQEV.

This sequence belongs to the SCF family. Homodimer, non-covalently linked. Post-translationally, a soluble form is produced by proteolytic processing of the extracellular domain.

Its subcellular location is the cytoplasm. The protein localises to the cytoskeleton. It is found in the cell membrane. The protein resides in the cell projection. It localises to the lamellipodium. Its subcellular location is the filopodium. The protein localises to the secreted. Stimulates the proliferation of mast cells. Able to augment the proliferation of both myeloid and lymphoid hematopoietic progenitors in bone marrow culture. Also mediates cell-cell adhesion. Acts synergistically with other cytokines, probably interleukins. The polypeptide is Kit ligand (KITLG) (Equus caballus (Horse)).